Here is a 76-residue protein sequence, read N- to C-terminus: uncharacterized protein (76 aa).

3 consecutive transmembrane segments (helical) span residues 1-21 (MTAIIVYSCLTMCVIYFHLQL), 35-55 (CFDIFLLLIEMLKLIFYLLII), and 56-76 (NNKFYIFIIISIALITINTMI).

Its subcellular location is the cell membrane. This is an uncharacterized protein from Borreliella burgdorferi (strain ATCC 35210 / DSM 4680 / CIP 102532 / B31) (Borrelia burgdorferi).